The following is a 302-amino-acid chain: tRNA-cytidine(32) 2-sulfurtransferase (302 aa).

Residues serine 57–serine 62 carry the PP-loop motif motif. [4Fe-4S] cluster-binding residues include cysteine 132, cysteine 135, and cysteine 223.

It belongs to the TtcA family. Homodimer. The cofactor is Mg(2+). It depends on [4Fe-4S] cluster as a cofactor.

It is found in the cytoplasm. It carries out the reaction cytidine(32) in tRNA + S-sulfanyl-L-cysteinyl-[cysteine desulfurase] + AH2 + ATP = 2-thiocytidine(32) in tRNA + L-cysteinyl-[cysteine desulfurase] + A + AMP + diphosphate + H(+). It participates in tRNA modification. Its function is as follows. Catalyzes the ATP-dependent 2-thiolation of cytidine in position 32 of tRNA, to form 2-thiocytidine (s(2)C32). The sulfur atoms are provided by the cysteine/cysteine desulfurase (IscS) system. In Marinobacter nauticus (strain ATCC 700491 / DSM 11845 / VT8) (Marinobacter aquaeolei), this protein is tRNA-cytidine(32) 2-sulfurtransferase.